Consider the following 82-residue polypeptide: ATP synthase subunit c, chloroplastic (82 aa).

A run of 2 helical transmembrane segments spans residues 4-24 and 57-77; these read IISA…AIGP and LAFM…LLFA.

This sequence belongs to the ATPase C chain family. F-type ATPases have 2 components, F(1) - the catalytic core - and F(0) - the membrane proton channel. F(1) has five subunits: alpha(3), beta(3), gamma(1), delta(1), epsilon(1). F(0) has four main subunits: a(1), b(1), b'(1) and c(10-14). The alpha and beta chains form an alternating ring which encloses part of the gamma chain. F(1) is attached to F(0) by a central stalk formed by the gamma and epsilon chains, while a peripheral stalk is formed by the delta, b and b' chains.

It is found in the plastid. Its subcellular location is the chloroplast thylakoid membrane. F(1)F(0) ATP synthase produces ATP from ADP in the presence of a proton or sodium gradient. F-type ATPases consist of two structural domains, F(1) containing the extramembraneous catalytic core and F(0) containing the membrane proton channel, linked together by a central stalk and a peripheral stalk. During catalysis, ATP synthesis in the catalytic domain of F(1) is coupled via a rotary mechanism of the central stalk subunits to proton translocation. Functionally, key component of the F(0) channel; it plays a direct role in translocation across the membrane. A homomeric c-ring of between 10-14 subunits forms the central stalk rotor element with the F(1) delta and epsilon subunits. This is ATP synthase subunit c, chloroplastic from Heterosigma akashiwo (strain NIES-293 / 8280G21-1).